The following is a 116-amino-acid chain: MALKIRLRQQGCKNHVVYRLVLADVESPRDGKYIELLGWYDPHSEQNYQLKSERIFYWLNQGAELTEKAGALVKQGAPGVYAELMAKKVARRAVVRQKRRAYRQRLAARKAEAAAK.

Belongs to the bacterial ribosomal protein bS16 family.

This chain is Small ribosomal subunit protein bS16, found in Chlamydia trachomatis serovar A (strain ATCC VR-571B / DSM 19440 / HAR-13).